A 322-amino-acid chain; its full sequence is MKITFLDFEQPIAELEAKIEELRFAQDDSAVDISAEILRLQKKSQSLTNSIYGKLTPWQISQVARHPQRPYTLDYIQNLFTDFEELHGDRGFADDYAIIGGLARFDGQTVMVIGHQKGRDTKEKIHRNFGMPKPEGYRKALRLMRLAEKFAIPLFTFIDTPGAYPGIGAEERGQSEAIGHNLYVMAELKVPVICTVIGEGGSGGALAVAVGDAIQMLQYATYSVISPEGCASILWKSADKAPEAAEIMGITAHRLKTLGLIDKIIDEPSGGAHRDQPATMQAVKKALQDSLKLLQEYSIHMLLEKRFERLMGYGQFKEVKVR.

The 264-residue stretch at 30–293 (AVDISAEILR…KKALQDSLKL (264 aa)) folds into the CoA carboxyltransferase C-terminal domain.

It belongs to the AccA family. Acetyl-CoA carboxylase is a heterohexamer composed of biotin carboxyl carrier protein (AccB), biotin carboxylase (AccC) and two subunits each of ACCase subunit alpha (AccA) and ACCase subunit beta (AccD).

The protein localises to the cytoplasm. It catalyses the reaction N(6)-carboxybiotinyl-L-lysyl-[protein] + acetyl-CoA = N(6)-biotinyl-L-lysyl-[protein] + malonyl-CoA. Its pathway is lipid metabolism; malonyl-CoA biosynthesis; malonyl-CoA from acetyl-CoA: step 1/1. Functionally, component of the acetyl coenzyme A carboxylase (ACC) complex. First, biotin carboxylase catalyzes the carboxylation of biotin on its carrier protein (BCCP) and then the CO(2) group is transferred by the carboxyltransferase to acetyl-CoA to form malonyl-CoA. This chain is Acetyl-coenzyme A carboxylase carboxyl transferase subunit alpha, found in Nitrosospira multiformis (strain ATCC 25196 / NCIMB 11849 / C 71).